Reading from the N-terminus, the 379-residue chain is Stimulator of interferon genes protein (379 aa).

At 1–17 (MPHSSLHPSIPCPRGHG) the chain is on the cytoplasmic side. The interval 1–190 (MPHSSLHPSI…TYNQHYNNLL (190 aa)) is mediates interaction with ZDHHC1 and ZDHHC11. The chain crosses the membrane as a helical span at residues 18–34 (AQKAALVLLSACLVTLW). K20 participates in a covalent cross-link: Glycyl lysine isopeptide (Lys-Gly) (interchain with G-Cter in ubiquitin). The Lumenal portion of the chain corresponds to 35 to 44 (GLGEPPEHTL). Residues 45–69 (RYLVLHLASLQLGLLLNGVCSLAEE) form a helical membrane-spanning segment. The Cytoplasmic segment spans residues 70 to 91 (LRHIHSRYRGSYWRTVRACLGC). Residues C88 and C91 are each lipidated (S-palmitoyl cysteine). The helical transmembrane segment at 92 to 106 (PLRRGALLLLSIYFY) threads the bilayer. Residues 107–116 (YSLPNAVGPP) lie on the Lumenal side of the membrane. A helical transmembrane segment spans residues 117–134 (FTWMLALLGLSQALNILL). At 135-379 (GLKGLAPAEI…KPLPLRTDFS (245 aa)) the chain is on the cytoplasmic side. A Glycyl lysine isopeptide (Lys-Gly) (interchain with G-Cter in ubiquitin) cross-link involves residue K150. The segment at 153 to 340 (FNVAHGLAWS…RHLRQEEKEE (188 aa)) is cyclic dinucleotide-binding domain (CBD). 2',3'-cGAMP-binding residues include S162 and Y167. 3',3'-c-di-GMP is bound by residues S162 and Y167. Y167 serves as a coordination point for 2',3'-cUAMP. T229 is subject to Phosphothreonine. Residue K236 forms a Glycyl lysine isopeptide (Lys-Gly) (interchain with G-Cter in ubiquitin) linkage. R238 contacts 2',3'-cGAMP. R238 is a 2',3'-cUAMP binding site. 3',3'-c-di-GMP-binding positions include 238 to 241 (RVYS) and T263. At S241 the chain carries Phosphoserine. T263 is a 2',3'-cGAMP binding site. Residue T263 participates in 2',3'-cUAMP binding. A Glycyl lysine isopeptide (Lys-Gly) (interchain with G-Cter in SUMO) cross-link involves residue K338. A C-terminal tail (CTT) region spans residues 340-379 (EVTVGSLKTSAVPSTSTMSQEPELLISGMEKPLPLRTDFS). The disordered stretch occupies residues 341-370 (VTVGSLKTSAVPSTSTMSQEPELLISGMEK). A compositionally biased stretch (polar residues) spans 345–359 (SLKTSAVPSTSTMSQ). Residue T354 is modified to Phosphothreonine. The residue at position 355 (S355) is a Phosphoserine; by MAP3K7. T356 is modified (phosphothreonine). Phosphoserine; by TBK1 occurs at positions 358 and 366. The pLxIS motif signature appears at 363–366 (LLIS).

Belongs to the STING family. As to quaternary structure, homodimer; forms a homodimer in absence of cyclic nucleotide (c-di-GMP or cGAMP); 'Lys-63'-linked ubiquitination at Lys-150 is required for homodimerization. Homotetramer; in presence of cyclic nucleotide (c-di-GMP or cGAMP), forms tetramers and higher-order oligomers through side-by-side packing. Interacts (when phosphorylated) with IRF3; following activation and phosphorylation on the pLxIS motif by TBK1, recruits IRF3. Interacts with RIGI, MAVS and SSR2. Interacts with RNF5 and TRIM56. Interacts with TBK1; when homodimer, leading to subsequent production of IFN-beta. Interacts with IFIT1 and IFIT2. Interacts with TRIM29; this interaction induces STING1 ubiquitination and subsequent degradation. Associates with the MHC-II complex. Interacts with STEEP1; interaction takes place upon cGAMP-activation and STING1 phosphorylation by MAP3K7/TAK1 and promotes STING1 translocation to COPII vesicles. Interacts with SEC24A, SEC24B, and SEC24C; promoting translocation to COPII vesicles. Interacts (when ubiquitinated) with SQSTM1; leading to relocalization to autophagosomes. Interacts with SURF4. Interacts with HNRNPA2B1. Interacts with ZDHHC1; ZDHHC1 constitutively interacts with STING1 and in presence of DNA viruses activates it by promoting its cGAMP-induced oligomerization and the recruitment of downstream signaling components. Interacts with ZDHHC11; in presence of DNA viruses promotes the recruitment of IRF3 to STING1. Interacts with TOMM70. Interacts with isoform IFI16-beta of IFI16. Interacts with TAB1; promoting recruitment of TAB1 to the endoplasmic reticulum membrane and subsequent activation of MAP3K7/TAK1. Interacts (via transmembrane domain) with TMEM203. Interacts with DDX41. Interacts with TMEM120A (via C-terminal domain); regulates the trafficking of STING1 from the ER to the ER-Golgi intermediate compartment to elicit antiviral effects. In terms of assembly, (Microbial infection) Interacts with human papillomavirus (HPV) protein E7. (Microbial infection) Interacts with adenovirus early E1A protein. As to quaternary structure, (Microbial infection) Interacts with herpes simplex virus 1 protein ICP34.5; this interaction inhibits the intracellular DNA sensing pathway. In terms of assembly, (Microbial infection) Interacts with Chikungunya virus non-structural protein 1; this interaction results in inhibition of cGAS-STING signaling and increased levels of palmitoylated nsP1 and protein stabilization. (Microbial infection) Interacts with human cytomegalovirus proteins UL94, UL42 and UL138; these interactions result in the inhibition of cGAS-STING signaling. As to quaternary structure, (Microbial infection) Interacts with varivella virus protein 39; this interaction results in the inhibition of cGAS-STING signaling. Phosphorylation by TBK1 leads to activation and production of IFN-beta. Following cyclic nucleotide (c-di-GMP or cGAMP)-binding, activation and translocation from the endoplasmic reticulum, STING1 is phosphorylated by TBK1 at Ser-366 in the pLxIS motif. The phosphorylated pLxIS motif constitutes an IRF3-binding motif, leading to recruitment of the transcription factor IRF3 to induce type-I interferons and other cytokines. The phosphorylated pLxIS motif facilitates SENP2 recruitment during late phase of viral infection. Phosphorylated on tyrosine residues upon MHC-II aggregation. Dephosphorylation by PPP6C leads to inactivation and decreased production of IFN-beta. Phosphorylation at Ser-358 is also required to activate IRF3. Phosphorylation at Ser-355 by MAP3K7/TAK1 facilitates its interaction with STEEP1, promoting STING1 translocation to COPII vesicles. In terms of processing, ubiquitinated. Ubiquitinated via 'Lys-63'-linked ubiquitin chains in response to double-stranded DNA treatment, leading to relocalization to autophagosomes and subsequent degradation; this process is dependent on SQSTM1. 'Lys-63'-linked ubiquitination mediated by TRIM56 at Lys-150 promotes homodimerization and recruitment of the antiviral kinase TBK1 and subsequent production of IFN-beta. 'Lys-48'-linked polyubiquitination at Lys-150 occurring after viral infection is mediated by RNF5 and leads to proteasomal degradation. 'Lys-11'-linked polyubiquitination at Lys-150 by RNF26 leads to stabilize STING1: it protects STING1 from RNF5-mediated 'Lys-48'-linked polyubiquitination. 'Lys-33'-linked and 'Lys-48'-linked deubiquitinated by USP20; leading to its stabilization and promotion of innate antiviral response. 'Lys-48'-linked deubiquitinated by USP44; leading to its stabilization and promotion of innate antiviral response. Deubiquitinated by USP13; leading to inhibition of innate antiviral response. 'Lys-63'-linked deubiquitinated by USP49; leading to inhibition of the subsequent recruitment of TBK1 to the signaling complex. 'Lys-63'-linked ubiquitination mediated by RNF39 promotes the activation of the cGAS-STING pathway. MARCHF5-mediated ubiquitination prevents the oxidation-induced polymer formation. Post-translationally, (Microbial infection) Deubiquitinated by Epstein-Barr virus BPLF1 on both 'Lys-48' and 'Lys-63'-linked ubiquitin chains; leading to inhibition of cGAS-STING signaling. Sumoylated at Lys-338 by TRIM38 during the early phase of viral infection, promoting its stability by preventing its relocalization to autophagosomes and subsequent degradation. Desumoylated by SENP2 during the late phase of viral infection. In terms of processing, palmitoylation takes place in the Golgi apparatus and creates a platform for the recruitment of TBK1. As to expression, ubiquitously expressed. Expressed in skin endothelial cells, alveolar type 2 pneumocytes, bronchial epithelium and alveolar macrophages.

Its subcellular location is the endoplasmic reticulum membrane. The protein resides in the cytoplasm. The protein localises to the perinuclear region. It localises to the endoplasmic reticulum-Golgi intermediate compartment membrane. It is found in the golgi apparatus membrane. Its subcellular location is the cytoplasmic vesicle. The protein resides in the autophagosome membrane. The protein localises to the mitochondrion outer membrane. It localises to the cell membrane. The catalysed reaction is H(+)(in) = H(+)(out). With respect to regulation, activated upon binding to the hydrolysis-resistant 2'3'-cG(s)A(s)MP, an analog of cGAMP, in which phosphodiester linkages are replaced by phosphothioate linkages. Specifically inhibited by small-molecule H-151 (N-(4-ethylphenyl)-N'-1H-indol-3-yl-urea), which covalently binds Cys-91 and prevents palmitoylation and subsequent activation of STING1. In contrast to mouse protein, not activated by anticancer molecule 5,6-dimethylxanthenone 4-acetic acid (DMXAA). Inhibited by compound 18 ([(3S,4S)-2-(4-tert-butyl-3-chlorophenyl)-3-(2,3-dihydro-1,4-benzodioxin-6-yl)-7-fluoro-1-oxo-1,2,3,4-tetrahydroisoquinolin-4-yl]acetate), a competitive inhibitor with slow dissociation kinetics and good oral bioavailability. Homooligomerization and ability to promote the production of type I interferons is activated by C53, a small benzothiazinone-like compound that binds to the transmembrane regions. in the area of the putative pore. In contrast, compound C53, directly inhibits the proton channel activity and facilitate MAP1LC3B/LC3B lipidation and autophagosome formation. Its function is as follows. Facilitator of innate immune signaling that acts as a sensor of cytosolic DNA from bacteria and viruses and promotes the production of type I interferon (IFN-alpha and IFN-beta). Innate immune response is triggered in response to non-CpG double-stranded DNA from viruses and bacteria delivered to the cytoplasm. Acts by binding cyclic dinucleotides: recognizes and binds cyclic di-GMP (c-di-GMP), a second messenger produced by bacteria, cyclic UMP-AMP (2',3'-cUAMP), and cyclic GMP-AMP (cGAMP), a messenger produced by CGAS in response to DNA virus in the cytosol. Upon binding to c-di-GMP, cUAMP or cGAMP, STING1 oligomerizes, translocates from the endoplasmic reticulum and is phosphorylated by TBK1 on the pLxIS motif, leading to recruitment and subsequent activation of the transcription factor IRF3 to induce expression of type I interferon and exert a potent anti-viral state. Exhibits 2',3' phosphodiester linkage-specific ligand recognition: can bind both 2'-3' linked cGAMP (2'-3'-cGAMP) and 3'-3' linked cGAMP but is preferentially activated by 2'-3' linked cGAMP. The preference for 2'-3'-cGAMP, compared to other linkage isomers is probably due to the ligand itself, whichs adopts an organized free-ligand conformation that resembles the STING1-bound conformation and pays low energy costs in changing into the active conformation. In addition to promote the production of type I interferons, plays a direct role in autophagy. Following cGAMP-binding, STING1 buds from the endoplasmic reticulum into COPII vesicles, which then form the endoplasmic reticulum-Golgi intermediate compartment (ERGIC). The ERGIC serves as the membrane source for WIPI2 recruitment and LC3 lipidation, leading to formation of autophagosomes that target cytosolic DNA or DNA viruses for degradation by the lysosome. Promotes autophagy by acting as a proton channel that directs proton efflux from the Golgi to facilitate MAP1LC3B/LC3B lipidation. The autophagy- and interferon-inducing activities can be uncoupled and autophagy induction is independent of TBK1 phosphorylation. Autophagy is also triggered upon infection by bacteria: following c-di-GMP-binding, which is produced by live Gram-positive bacteria, promotes reticulophagy. May be involved in translocon function, the translocon possibly being able to influence the induction of type I interferons. May be involved in transduction of apoptotic signals via its association with the major histocompatibility complex class II (MHC-II). (Microbial infection) Antiviral activity is antagonized by oncoproteins, such as papillomavirus (HPV) protein E7 and adenovirus early E1A protein. Such oncoproteins prevent the ability to sense cytosolic DNA. The polypeptide is Stimulator of interferon genes protein (Homo sapiens (Human)).